The sequence spans 591 residues: DEAD-box ATP-dependent RNA helicase 35 (591 aa).

Residues Lys-146–Val-174 carry the Q motif motif. The 185-residue stretch at Leu-177–Val-361 folds into the Helicase ATP-binding domain. Residue Ala-190–Thr-197 coordinates ATP. Positions Asp-309–Asp-312 match the DEAD box motif. A Helicase C-terminal domain is found at Asp-372–Asn-532. The CCHC-type zinc finger occupies Lys-548–Lys-565.

This sequence belongs to the DEAD box helicase family. DDX41 subfamily.

It catalyses the reaction ATP + H2O = ADP + phosphate + H(+). This Arabidopsis thaliana (Mouse-ear cress) protein is DEAD-box ATP-dependent RNA helicase 35 (RH35).